The chain runs to 206 residues: Protein GET1 (206 aa).

Over 1–4 (MPSL) the chain is Lumenal. A helical membrane pass occupies residues 5–24 (LITVLFLNVIIYVVNTVGAA). Residues 25-110 (TVDGLLWLLY…TFDMTIKIAR (86 aa)) are Cytoplasmic-facing. Residues 75 to 100 (AKLRRRHDKALEAYEAKNNELTQSKS) adopt a coiled-coil conformation. A helical transmembrane segment spans residues 111-131 (WAATSGLMLFLQFWYSKTPIF). Residues 132-155 (TLPPGWIPWQVQWVLSFPRAPMGT) are Lumenal-facing. Residues 156 to 172 (VSIQIWGGACATVVALV) form a helical membrane-spanning segment. Over 173 to 206 (GDAMKASLAYVSKPKIDRIKLGATMEGKEGKKRQ) the chain is Cytoplasmic.

Belongs to the WRB/GET1 family. As to quaternary structure, interacts with GET3.

It is found in the endoplasmic reticulum membrane. In terms of biological role, required for the post-translational delivery of tail-anchored (TA) proteins to the endoplasmic reticulum. Acts as a membrane receptor for soluble GET3, which recognizes and selectively binds the transmembrane domain of TA proteins in the cytosol. In Ajellomyces capsulatus (strain G186AR / H82 / ATCC MYA-2454 / RMSCC 2432) (Darling's disease fungus), this protein is Protein GET1.